We begin with the raw amino-acid sequence, 239 residues long: Transcriptional regulatory protein BtsR (239 aa).

The Response regulatory domain occupies 3–116 (KVLIVDDEPL…RLEKTLHRLR (114 aa)). A 4-aspartylphosphate modification is found at D54. Residues 137-239 (IPCTGHSRIY…LKSLKEAIGL (103 aa)) form the HTH LytTR-type domain.

In terms of processing, phosphorylated by BtsS.

Functionally, member of the two-component regulatory system BtsS/BtsR. BtsR regulates expression of btsT by binding to its promoter region. The polypeptide is Transcriptional regulatory protein BtsR (Salmonella typhi).